The chain runs to 305 residues: Ribonuclease BN (305 aa).

Residues His-64, His-66, Asp-68, His-69, His-141, Asp-212, and His-270 each coordinate Zn(2+). The active-site Proton acceptor is Asp-68.

The protein belongs to the RNase Z family. RNase BN subfamily. As to quaternary structure, homodimer. Zn(2+) serves as cofactor.

Zinc phosphodiesterase, which has both exoribonuclease and endoribonuclease activities. The chain is Ribonuclease BN from Citrobacter koseri (strain ATCC BAA-895 / CDC 4225-83 / SGSC4696).